The following is a 208-amino-acid chain: Uracil phosphoribosyltransferase (208 aa).

5-phospho-alpha-D-ribose 1-diphosphate contacts are provided by residues R78, R103, and 130-138 (DPMLATGGT). Residues I193 and 198–200 (GDA) each bind uracil. D199 lines the 5-phospho-alpha-D-ribose 1-diphosphate pocket.

Belongs to the UPRTase family. Requires Mg(2+) as cofactor.

It carries out the reaction UMP + diphosphate = 5-phospho-alpha-D-ribose 1-diphosphate + uracil. The protein operates within pyrimidine metabolism; UMP biosynthesis via salvage pathway; UMP from uracil: step 1/1. Allosterically activated by GTP. Functionally, catalyzes the conversion of uracil and 5-phospho-alpha-D-ribose 1-diphosphate (PRPP) to UMP and diphosphate. The sequence is that of Uracil phosphoribosyltransferase from Nitratidesulfovibrio vulgaris (strain DSM 19637 / Miyazaki F) (Desulfovibrio vulgaris).